A 79-amino-acid chain; its full sequence is Putative membrane protein insertion efficiency factor (79 aa).

Belongs to the UPF0161 family.

The protein localises to the cell inner membrane. In terms of biological role, could be involved in insertion of integral membrane proteins into the membrane. The sequence is that of Putative membrane protein insertion efficiency factor from Bacteroides thetaiotaomicron (strain ATCC 29148 / DSM 2079 / JCM 5827 / CCUG 10774 / NCTC 10582 / VPI-5482 / E50).